Here is a 228-residue protein sequence, read N- to C-terminus: AA9 family lytic polysaccharide monooxygenase A (228 aa).

Residues H1 and H86 each contribute to the Cu(2+) site. Methylhistidine is present on H1. 2 disulfides stabilise this stretch: C56–C178 and C97–C101. The N-linked (GlcNAc...) asparagine glycan is linked to N138. O2 is bound by residues H164 and Q173. Y175 contacts Cu(2+).

It belongs to the polysaccharide monooxygenase AA9 family. Cu(2+) serves as cofactor. The catalytically essential N-terminal histidine His-22 is post-translationally modified by methylation to prevent protonation of the histidine side chain, and protect the critical active site of the enzyme from oxidative damage.

Its subcellular location is the secreted. The enzyme catalyses [(1-&gt;4)-beta-D-glucosyl]n+m + reduced acceptor + O2 = 4-dehydro-beta-D-glucosyl-[(1-&gt;4)-beta-D-glucosyl]n-1 + [(1-&gt;4)-beta-D-glucosyl]m + acceptor + H2O.. Small amounts of H(2)O(2) boost LPMO activity, while higher amounts lead to inactivation of the enzyme. Its function is as follows. Lytic polysaccharide monooxygenase (LPMO) that depolymerizes crystalline and amorphous polysaccharides via the oxidation of scissile alpha- or beta-(1-4)-glycosidic bonds, yielding C1 and C4 oxidation product. Catalysis by LPMOs requires the reduction of the active-site copper from Cu(II) to Cu(I) by a reducing agent and H(2)O(2) or O(2) as a cosubstrate. Is able to cleave cellulose and xylan to produce C1- and C4-oxidized products. In Thermoascus aurantiacus, this protein is AA9 family lytic polysaccharide monooxygenase A.